The sequence spans 736 residues: Polyribonucleotide nucleotidyltransferase (736 aa).

Residues Asp488 and Asp494 each coordinate Mg(2+). Positions 555–614 (PMVQTLEIQKEKIRDVIGLGGKVIKELCKTFDVEIDISENGEVKVWGNVGENVKKAVQSI) constitute a KH domain. The 69-residue stretch at 624-692 (GDIFDGEVVK…HKNRVKLTLR (69 aa)) folds into the S1 motif domain.

Belongs to the polyribonucleotide nucleotidyltransferase family. It depends on Mg(2+) as a cofactor.

Its subcellular location is the cytoplasm. It carries out the reaction RNA(n+1) + phosphate = RNA(n) + a ribonucleoside 5'-diphosphate. Involved in mRNA degradation. Catalyzes the phosphorolysis of single-stranded polyribonucleotides processively in the 3'- to 5'-direction. The polypeptide is Polyribonucleotide nucleotidyltransferase (Orientia tsutsugamushi (strain Ikeda) (Rickettsia tsutsugamushi)).